The following is a 206-amino-acid chain: Recombination protein RecR (206 aa).

The C4-type zinc-finger motif lies at cysteine 58–cysteine 73. One can recognise a Toprim domain in the interval glutamine 81–serine 176.

Belongs to the RecR family.

Its function is as follows. May play a role in DNA repair. It seems to be involved in an RecBC-independent recombinational process of DNA repair. It may act with RecF and RecO. The chain is Recombination protein RecR from Flavobacterium psychrophilum (strain ATCC 49511 / DSM 21280 / CIP 103535 / JIP02/86).